The primary structure comprises 185 residues: Potassium-transporting ATPase KdpC subunit (185 aa).

The helical transmembrane segment at 11–31 (LALLMTLVTGALYPLAVTGIA) threads the bilayer.

The protein belongs to the KdpC family. The system is composed of three essential subunits: KdpA, KdpB and KdpC.

It localises to the cell inner membrane. Functionally, part of the high-affinity ATP-driven potassium transport (or Kdp) system, which catalyzes the hydrolysis of ATP coupled with the electrogenic transport of potassium into the cytoplasm. This subunit acts as a catalytic chaperone that increases the ATP-binding affinity of the ATP-hydrolyzing subunit KdpB by the formation of a transient KdpB/KdpC/ATP ternary complex. In Pseudomonas putida (strain ATCC 47054 / DSM 6125 / CFBP 8728 / NCIMB 11950 / KT2440), this protein is Potassium-transporting ATPase KdpC subunit.